A 545-amino-acid chain; its full sequence is Intercellular adhesion molecule 1 (545 aa).

A signal peptide spans 1 to 27 (MASTRARPMLPLLLVLVAVVIPGPVGA). Residues 28 to 492 (QVSIHPTEAF…HLTVLYHDQN (465 aa)) lie on the Extracellular side of the membrane. Ig-like C2-type domains lie at 41–103 (GGSV…QSSA) and 128–193 (GKNL…LDLR). A glycan (N-linked (GlcNAc...) asparagine) is linked at Asn-47. Disulfide bonds link Cys-48/Cys-92, Cys-52/Cys-96, and Cys-135/Cys-186. N-linked (GlcNAc...) asparagine glycosylation is present at Asn-154. Positions 177 to 179 (RGD) match the Cell attachment site motif. N-linked (GlcNAc...) asparagine glycosylation is found at Asn-183 and Asn-202. Residues 230–297 (GTQQKFLCSL…LRCVLELADQ (68 aa)) enclose the Ig-like C2-type 3 domain. Cys-237 and Cys-290 are joined by a disulfide. Asn-309, Asn-344, Asn-396, Asn-417, Asn-439, and Asn-464 each carry an N-linked (GlcNAc...) asparagine glycan. One can recognise an Ig-like C2-type 4 domain in the interval 325–389 (GDQVTVKCEA…FFCSAALEVD (65 aa)). The cysteines at positions 332 and 382 are disulfide-linked. The disordered stretch occupies residues 343 to 365 (LNSTSPRPPTSQGTSPRPPTSQI). Cystine bridges form between Cys-414–Cys-430, Cys-430–Cys-469, and Cys-442–Cys-469. Positions 423–476 (GSQQTLTCQPQGNPAPNLTCSRKADGVPLPIGMVKSVKREMNGTYKCRAFSSRG) constitute an Ig-like C2-type 5 domain. The helical transmembrane segment at 493-517 (TWVIIVGVLVLIIAGFVIVASIYTY) threads the bilayer. Residues 518 to 545 (YRQRKIRIYKLQKAQEEALKLKVQAPPP) are Cytoplasmic-facing.

Belongs to the immunoglobulin superfamily. ICAM family. As to quaternary structure, homodimer. Interacts with MUC1 and promotes cell aggregation in epithelial cells. Interacts with ARHGEF26/SGEF. Interacts (on T cell side) with CD81, CD247 and CD9 at immunological synapses between antigen-presenting cells and T cells. Post-translationally, monoubiquitinated, which is promoted by MARCH9 and leads to endocytosis.

It localises to the membrane. Functionally, ICAM proteins are ligands for the leukocyte adhesion protein LFA-1 (integrin alpha-L/beta-2). During leukocyte trans-endothelial migration, ICAM1 engagement promotes the assembly of endothelial apical cups through ARHGEF26/SGEF and RHOG activation. The sequence is that of Intercellular adhesion molecule 1 (Icam1) from Rattus norvegicus (Rat).